The sequence spans 162 residues: MKSRNFFSKLKEESYDVGIFDLMNAKVYLEKDLTYLPEDYKKGYLEDFFTFFPEVLREIKNKTEEEIEDFEINEEEIKKVDSRICSMGSIGASRDSYEKLVKTVINYLIFINKRPLHALTTRFPGGKQIIEKNGNYYCPIKNAQSNELSICEFCICKDLNEL.

It belongs to the UPF0305 family.

The polypeptide is UPF0305 protein MmarC6_0221 (Methanococcus maripaludis (strain C6 / ATCC BAA-1332)).